A 108-amino-acid chain; its full sequence is UPF0145 protein YjfJ (108 aa).

This sequence belongs to the UPF0145 family.

The polypeptide is UPF0145 protein YjfJ (yjfJ) (Lactococcus lactis subsp. lactis (strain IL1403) (Streptococcus lactis)).